Consider the following 572-residue polypeptide: Mitochondrial distribution and morphology protein 34 (572 aa).

In terms of domain architecture, SMP-LTD spans 1 to 195 (MAFNFNWSPL…LPAIIHRLSL (195 aa)). 4 disordered regions span residues 208 to 236 (LQTQTESANGEGPGQDPLASPPQDPVDAL), 296 to 405 (PSDQ…CSAP), 455 to 518 (RDTA…PFIN), and 551 to 572 (NACGPFWDRHSQEESPPPAYGH). Positions 296–347 (PSDQTDASGGVTSPFSPVLSRTQSQVGSMSSFPDSASMVSNQSRSSTPSHTF) are enriched in polar residues. Basic residues predominate over residues 358–370 (RHSKAHARKRKKR). Basic and acidic residues predominate over residues 371-381 (VVDLRRPKTTD). 2 stretches are compositionally biased toward polar residues: residues 387 to 401 (SDESAFTESTSTPSI) and 498 to 511 (ATGSSAGSSRQLPS).

It belongs to the MDM34 family. As to quaternary structure, component of the ER-mitochondria encounter structure (ERMES) or MDM complex, composed of mmm1, mdm10, mdm12 and mdm34.

It localises to the mitochondrion outer membrane. In terms of biological role, component of the ERMES/MDM complex, which serves as a molecular tether to connect the endoplasmic reticulum (ER) and mitochondria. Components of this complex are involved in the control of mitochondrial shape and protein biogenesis, and function in nonvesicular lipid trafficking between the ER and mitochondria. Mdm34 is required for the interaction of the ER-resident membrane protein mmm1 and the outer mitochondrial membrane-resident beta-barrel protein mdm10. This is Mitochondrial distribution and morphology protein 34 from Neosartorya fischeri (strain ATCC 1020 / DSM 3700 / CBS 544.65 / FGSC A1164 / JCM 1740 / NRRL 181 / WB 181) (Aspergillus fischerianus).